A 281-amino-acid chain; its full sequence is 2-dehydro-3-deoxyphosphooctonate aldolase (281 aa).

Belongs to the KdsA family.

It is found in the cytoplasm. The catalysed reaction is D-arabinose 5-phosphate + phosphoenolpyruvate + H2O = 3-deoxy-alpha-D-manno-2-octulosonate-8-phosphate + phosphate. It participates in carbohydrate biosynthesis; 3-deoxy-D-manno-octulosonate biosynthesis; 3-deoxy-D-manno-octulosonate from D-ribulose 5-phosphate: step 2/3. The protein operates within bacterial outer membrane biogenesis; lipopolysaccharide biosynthesis. This is 2-dehydro-3-deoxyphosphooctonate aldolase from Pseudomonas putida (strain GB-1).